Reading from the N-terminus, the 193-residue chain is Segregation and condensation protein B (193 aa).

Belongs to the ScpB family. As to quaternary structure, homodimer. Homodimerization may be required to stabilize the binding of ScpA to the Smc head domains. Component of a cohesin-like complex composed of ScpA, ScpB and the Smc homodimer, in which ScpA and ScpB bind to the head domain of Smc. The presence of the three proteins is required for the association of the complex with DNA.

It localises to the cytoplasm. Its function is as follows. Participates in chromosomal partition during cell division. May act via the formation of a condensin-like complex containing Smc and ScpA that pull DNA away from mid-cell into both cell halves. The polypeptide is Segregation and condensation protein B (Clostridium botulinum (strain ATCC 19397 / Type A)).